We begin with the raw amino-acid sequence, 358 residues long: MIIKDIVIGHLSVPLKKPFKTAVRSVNSVNDVVVKIITDTGNVGFGSAASTGLVTGDITESIEGAINNYIKRSIVGMDIEDFEAILIKLDNCIVGNTSAKAAVDIALYDLYGQRYGAPLYKLLGGFRNKLETDITISVNSPEEMSRDSVDAVKLGYKTLKIKVGKNPKLDIKRMREIRKAIGYEVNLRIDANQGWQPKEAIRALNEIENEGLKIELVEQPVKAWNLEGLKMVTDNVNIPVMADESVFSPKDAARVMEMRACDLINIKLMKTGGIHNALKICALAEVYGMECMLGCMLEGKVSVTAAVHLAAAKRIITKIDLDGPVLCSRDDVVGGAMYDNSNIVLVDEPGLGIEGINN.

Positions 24, 135, and 160 each coordinate substrate. Lysine 162 functions as the Proton acceptor; specific for (R)-substrate epimerization in the catalytic mechanism. Positions 190, 218, and 243 each coordinate Mg(2+). Lysine 267 acts as the Proton acceptor; specific for (S)-substrate epimerization in catalysis. Positions 295, 320, and 322 each coordinate substrate.

This sequence belongs to the mandelate racemase/muconate lactonizing enzyme family. It depends on Mg(2+) as a cofactor.

It catalyses the reaction L-alanyl-L-glutamate = L-alanyl-D-glutamate. The protein operates within cell wall degradation; peptidoglycan degradation. Its function is as follows. Catalyzes the epimerization of L-Ala-D-Glu to L-Ala-L-Glu and has probably a role in the metabolism of the murein peptide, of which L-Ala-D-Glu is a component. Is also able to catalyze the epimerization of L-Ala-D-Asp. In Clostridium acetobutylicum (strain ATCC 824 / DSM 792 / JCM 1419 / IAM 19013 / LMG 5710 / NBRC 13948 / NRRL B-527 / VKM B-1787 / 2291 / W), this protein is L-Ala-D/L-Glu epimerase.